A 152-amino-acid polypeptide reads, in one-letter code: Superoxide dismutase [Cu-Zn] 2 (152 aa).

Positions 45, 47, and 62 each coordinate Cu cation. Residues cysteine 56 and cysteine 145 are joined by a disulfide bond. 4 residues coordinate Zn(2+): histidine 62, histidine 70, histidine 79, and aspartate 82. Histidine 119 is a Cu cation binding site.

Belongs to the Cu-Zn superoxide dismutase family. In terms of assembly, homodimer. Cu cation serves as cofactor. Requires Zn(2+) as cofactor.

It is found in the cytoplasm. The catalysed reaction is 2 superoxide + 2 H(+) = H2O2 + O2. Its function is as follows. Destroys radicals which are normally produced within the cells and which are toxic to biological systems. The sequence is that of Superoxide dismutase [Cu-Zn] 2 (SODCC2) from Oryza sativa subsp. japonica (Rice).